The sequence spans 330 residues: Flotillin-like protein FloA (330 aa).

2 helical membrane passes run 3–23 (IISVIVIGGLVLVAIVATLYM) and 26–46 (LRLWIAAQASGAGVSMLTLIA).

The protein belongs to the flotillin-like FloA family. As to quaternary structure, homooligomerizes.

Its subcellular location is the cell membrane. The protein localises to the membrane raft. In terms of biological role, found in functional membrane microdomains (FMM) that may be equivalent to eukaryotic membrane rafts. FMMs are highly dynamic and increase in number as cells age. Flotillins are thought to be important factors in membrane fluidity. This Sorangium cellulosum (strain So ce56) (Polyangium cellulosum (strain So ce56)) protein is Flotillin-like protein FloA.